We begin with the raw amino-acid sequence, 113 residues long: Dolichyl-diphosphooligosaccharide--protein glycosyltransferase subunit dad1 (113 aa).

At 1-30 (MSVSVFSVVSRFLDEYVSSTPQRLKLLDAY) the chain is on the cytoplasmic side. Residues 31-51 (LLYILLTGALQFLYCLLVGTF) form a helical membrane-spanning segment. Position 52 (Pro52) is a topological domain, lumenal. Residues 53 to 73 (FNSFLSGFISSVGSFILAVCL) traverse the membrane as a helical segment. The Cytoplasmic segment spans residues 74-92 (RIQINPQNKSDFQGISPER). A helical membrane pass occupies residues 93–113 (AFADFLFANTILHLVVVNFIG).

The protein belongs to the DAD/OST2 family. In terms of assembly, component of the oligosaccharyltransferase (OST) complex.

It localises to the endoplasmic reticulum membrane. The protein operates within protein modification; protein glycosylation. Its function is as follows. Subunit of the oligosaccharyl transferase (OST) complex that catalyzes the initial transfer of a defined glycan (Glc(3)Man(9)GlcNAc(2) in eukaryotes) from the lipid carrier dolichol-pyrophosphate to an asparagine residue within an Asn-X-Ser/Thr consensus motif in nascent polypeptide chains, the first step in protein N-glycosylation. N-glycosylation occurs cotranslationally and the complex associates with the Sec61 complex at the channel-forming translocon complex that mediates protein translocation across the endoplasmic reticulum (ER). All subunits are required for a maximal enzyme activity. The sequence is that of Dolichyl-diphosphooligosaccharide--protein glycosyltransferase subunit dad1 from Xenopus laevis (African clawed frog).